The primary structure comprises 347 residues: MNPIIFIIILMTVMLGTTIVMISSHWLRIWIGFEMNMLAIIPIMMKKHNPRATAASSDYFLTQSTASMLLMMAIIINLMFSGQWTVTKLFHPTASMLMTMALAMKLGMAPFHFWVPEVTQGIPLSSGLILLTWQKLVPMSVLYQILPSINLDLILTLSILSIMIGGWGGLNQTQLRKIMAYSSIAHMGWMTAILPYNPTMMLLNLIIYITMTSTMFLLFMANSTTTTLSLSLTWNKMPIMTTLVLITLLSMGGLPPLSGFVPKWMIIQEMTKNNSIILPTLMAITALLNLYFYMRLTYSTTLTMFPSTNNMKMKWQFSTTKRMTLLPTLTVLSTMLLPLTPILSILE.

A run of 11 helical transmembrane segments spans residues 3–23 (PIIF…VMIS), 25–45 (HWLR…PIMM), 66–86 (ASML…QWTV), 96–116 (MLMT…FWVP), 122–142 (IPLS…MSVL), 145–165 (ILPS…IMIG), 178–198 (IMAY…PYNP), 200–220 (MMLL…LLFM), 237–257 (MPIM…LPPL), 274–294 (NSII…YFYM), and 325–345 (LLPT…ILSI).

It belongs to the complex I subunit 2 family. Core subunit of respiratory chain NADH dehydrogenase (Complex I) which is composed of 45 different subunits. Interacts with TMEM242.

The protein localises to the mitochondrion inner membrane. The catalysed reaction is a ubiquinone + NADH + 5 H(+)(in) = a ubiquinol + NAD(+) + 4 H(+)(out). Its function is as follows. Core subunit of the mitochondrial membrane respiratory chain NADH dehydrogenase (Complex I) which catalyzes electron transfer from NADH through the respiratory chain, using ubiquinone as an electron acceptor. Essential for the catalytic activity and assembly of complex I. The polypeptide is NADH-ubiquinone oxidoreductase chain 2 (Capra hircus (Goat)).